The chain runs to 62 residues: Light-harvesting protein B-870 alpha chain (62 aa).

Met-1 bears the N-formylmethionine mark. At 1 to 12 (MWRIWQLFDPRQ) the chain is on the cytoplasmic side. Residues 13–33 (ALVGLATFLFVLALLIHFILL) traverse the membrane as a helical segment. His-29 provides a ligand contact to a bacteriochlorophyll. Topologically, residues 34-52 (STERFNWLEGASTKPVQTS) are periplasmic. Positions 53–62 (MVMPSSDLAV) are excised as a propeptide.

The protein belongs to the antenna complex alpha subunit family. In terms of assembly, the core complex is formed by different alpha and beta chains, binding bacteriochlorophyll molecules, and arranged most probably in tetrameric structures disposed around the reaction center. The non-pigmented gamma chains may constitute additional components.

The protein localises to the cell inner membrane. Functionally, antenna complexes are light-harvesting systems, which transfer the excitation energy to the reaction centers. The protein is Light-harvesting protein B-870 alpha chain of Rhodospirillum rubrum.